Reading from the N-terminus, the 294-residue chain is NADH-cytochrome b5 reductase 2 (294 aa).

The chain crosses the membrane as a helical span at residues 11-27 (VLLPVVAAATSIGLVYH). Residues 45 to 149 (DEWIDLKLKK…KGPIVKWKWE (105 aa)) form the FAD-binding FR-type domain. Residue 152-187 (QFQSIALIGGGTGITPLYQLLHEITKNPEDKTKVKL) coordinates FAD.

The protein belongs to the flavoprotein pyridine nucleotide cytochrome reductase family. FAD is required as a cofactor.

It is found in the mitochondrion outer membrane. The catalysed reaction is 2 Fe(III)-[cytochrome b5] + NADH = 2 Fe(II)-[cytochrome b5] + NAD(+) + H(+). Its function is as follows. May mediate the reduction of outer membrane cytochrome b5. The chain is NADH-cytochrome b5 reductase 2 (MCR1) from Meyerozyma guilliermondii (strain ATCC 6260 / CBS 566 / DSM 6381 / JCM 1539 / NBRC 10279 / NRRL Y-324) (Yeast).